The following is a 583-amino-acid chain: Aspartate--tRNA ligase (583 aa).

E174 serves as a coordination point for L-aspartate. Residues 198-201 are aspartate; that stretch reads QITK. Residue R220 participates in L-aspartate binding. ATP contacts are provided by residues 220–222 and Q229; that span reads RDE. H443 provides a ligand contact to L-aspartate. Position 477 (E477) interacts with ATP. R484 is a binding site for L-aspartate. 529 to 532 lines the ATP pocket; that stretch reads GLDR.

This sequence belongs to the class-II aminoacyl-tRNA synthetase family. Type 1 subfamily. As to quaternary structure, homodimer.

It localises to the cytoplasm. The enzyme catalyses tRNA(Asp) + L-aspartate + ATP = L-aspartyl-tRNA(Asp) + AMP + diphosphate. Its function is as follows. Catalyzes the attachment of L-aspartate to tRNA(Asp) in a two-step reaction: L-aspartate is first activated by ATP to form Asp-AMP and then transferred to the acceptor end of tRNA(Asp). This is Aspartate--tRNA ligase from Streptococcus agalactiae serotype Ia (strain ATCC 27591 / A909 / CDC SS700).